A 636-amino-acid polypeptide reads, in one-letter code: 1-deoxy-D-xylulose-5-phosphate synthase 2 (636 aa).

Thiamine diphosphate contacts are provided by residues H78 and 119 to 121; that span reads AHS. D150 contributes to the Mg(2+) binding site. Residues 151–152, N179, Y288, and E370 contribute to the thiamine diphosphate site; that span reads GS. N179 contributes to the Mg(2+) binding site.

Belongs to the transketolase family. DXPS subfamily. Homodimer. Mg(2+) is required as a cofactor. Thiamine diphosphate serves as cofactor.

The catalysed reaction is D-glyceraldehyde 3-phosphate + pyruvate + H(+) = 1-deoxy-D-xylulose 5-phosphate + CO2. Its pathway is metabolic intermediate biosynthesis; 1-deoxy-D-xylulose 5-phosphate biosynthesis; 1-deoxy-D-xylulose 5-phosphate from D-glyceraldehyde 3-phosphate and pyruvate: step 1/1. Functionally, catalyzes the acyloin condensation reaction between C atoms 2 and 3 of pyruvate and glyceraldehyde 3-phosphate to yield 1-deoxy-D-xylulose-5-phosphate (DXP). The sequence is that of 1-deoxy-D-xylulose-5-phosphate synthase 2 from Jannaschia sp. (strain CCS1).